A 345-amino-acid chain; its full sequence is tRNA-dihydrouridine(20/20a) synthase (345 aa).

Residues Pro32–Leu34 and Gln84 each bind FMN. Cys114 serves as the catalytic Proton donor. Residues Lys153, His186, Asn226–Gly228, and Gly248–Arg249 contribute to the FMN site.

Belongs to the Dus family. DusA subfamily. It depends on FMN as a cofactor.

The enzyme catalyses 5,6-dihydrouridine(20) in tRNA + NADP(+) = uridine(20) in tRNA + NADPH + H(+). It carries out the reaction 5,6-dihydrouridine(20) in tRNA + NAD(+) = uridine(20) in tRNA + NADH + H(+). It catalyses the reaction 5,6-dihydrouridine(20a) in tRNA + NADP(+) = uridine(20a) in tRNA + NADPH + H(+). The catalysed reaction is 5,6-dihydrouridine(20a) in tRNA + NAD(+) = uridine(20a) in tRNA + NADH + H(+). Its function is as follows. Catalyzes the synthesis of 5,6-dihydrouridine (D), a modified base found in the D-loop of most tRNAs, via the reduction of the C5-C6 double bond in target uridines. Specifically modifies U20 and U20a in tRNAs. In Escherichia coli O157:H7, this protein is tRNA-dihydrouridine(20/20a) synthase.